The primary structure comprises 105 residues: 3-phenylpropionate/cinnamic acid dioxygenase ferredoxin subunit (105 aa).

The Rieske domain occupies 4-99; the sequence is LFVCTVEELP…VVVKDGNIYI (96 aa). The [2Fe-2S] cluster site is built by C42, H44, C62, and H65.

The protein belongs to the bacterial ring-hydroxylating dioxygenase ferredoxin component family. This dioxygenase system consists of four proteins: the two subunits of the hydroxylase component (HcaE and HcaF), a ferredoxin (HcaC) and a ferredoxin reductase (HcaD). [2Fe-2S] cluster is required as a cofactor.

It participates in aromatic compound metabolism; 3-phenylpropanoate degradation. In terms of biological role, part of the multicomponent 3-phenylpropionate dioxygenase, that converts 3-phenylpropionic acid (PP) and cinnamic acid (CI) into 3-phenylpropionate-dihydrodiol (PP-dihydrodiol) and cinnamic acid-dihydrodiol (CI-dihydrodiol), respectively. This protein seems to be a 2Fe-2S ferredoxin. The chain is 3-phenylpropionate/cinnamic acid dioxygenase ferredoxin subunit from Photorhabdus laumondii subsp. laumondii (strain DSM 15139 / CIP 105565 / TT01) (Photorhabdus luminescens subsp. laumondii).